The primary structure comprises 274 residues: SPbeta prophage-derived UPF0714 protein YoqZ (274 aa).

The protein belongs to the UPF0714 family.

The chain is SPbeta prophage-derived UPF0714 protein YoqZ (yoqZ) from Bacillus subtilis (strain 168).